We begin with the raw amino-acid sequence, 675 residues long: Metal-nicotianamine transporter YSL3 (675 aa).

The next 14 helical transmembrane spans lie at 42-62, 66-86, 114-134, 159-179, 219-239, 280-300, 325-345, 386-406, 408-428, 450-470, 504-524, 556-576, 602-622, and 630-650; these read ITFR…VIVM, LTTG…FVFL, CAVA…LLGL, GIGW…LALV, VFGF…QWFF, IVNI…WPLI, VFIS…KILF, IPLW…IIAI, IMFP…APSL, VALF…AGLV, VSQA…FFLF, FSAL…FAVA, FLVG…VFAW, and AGLM…LWIL.

This sequence belongs to the YSL (TC 2.A.67.2) family. As to expression, expressed in leaves, anthers and pollen grains. Restricted to the vasculature.

The protein localises to the membrane. In terms of biological role, may be involved in the lateral transport of nicotianamine-chelated metals in the vasculature. The chain is Metal-nicotianamine transporter YSL3 (YSL3) from Arabidopsis thaliana (Mouse-ear cress).